Reading from the N-terminus, the 369-residue chain is MADSAQAQKLVYLVTGGCGFLGEHVVRMLLQREPRLGELRVFDQHLGPWLEELKTGPVRVTAIQGDVTQAHEVAAAVAGAHVVIHTAGLVDVFGRASPKTIHEVNVQGTRNVIEACVQTGTRFLVYTSSMEVVGPNTKGHPFYRGNEDTPYEAVHRHPYPCSKALAEWLVLEANGRKVRGGLPLVTCALRPTGIYGEGHQIMRDFYRQGLRLGGWLFRAIPASVEHGRVYVGNVAWMHVLAARELEQRATLMGGQVYFCYDGSPYRSYEDFNMEFLGPCGLRLVGARPLLPYWLLVFLAALNALLQWLLRPLVLYAPLLNPYTLAVANTTFTVSTDKAQRHFGYEPLFSWEDSRTRTILWVQAATGSAQ.

Catalysis depends on Y159, which acts as the Proton acceptor. Position 163 (K163) interacts with NAD(+). Helical transmembrane passes span 289 to 309 (LLPY…QWLL) and 311 to 331 (PLVL…NTTF).

This sequence belongs to the 3-beta-HSD family.

It is found in the endoplasmic reticulum membrane. It carries out the reaction 7alpha-hydroxycholesterol + NAD(+) = 7alpha-hydroxycholest-4-en-3-one + NADH + H(+). It catalyses the reaction 7alpha,25-dihydroxycholesterol + NAD(+) = 7alpha,25-dihydroxy-4-cholesten-3-one + NADH + H(+). The catalysed reaction is (25R)-cholest-5-en-3beta,7alpha,26-triol + NAD(+) = (25R)-7alpha,26-dihydroxycholest-4-en-3-one + NADH + H(+). The enzyme catalyses (24S)-7alpha-dihydroxycholesterol + NAD(+) = (24S)-7alpha,24-dihydroxycholest-4-en-3-one + NADH + H(+). The protein operates within lipid metabolism; steroid biosynthesis. Its function is as follows. The 3-beta-HSD enzymatic system plays a crucial role in the biosynthesis of all classes of hormonal steroids. HSD VII is active against four 7-alpha-hydroxylated sterols. Does not metabolize several different C(19/21) steroids as substrates. Involved in bile acid synthesis. Plays a key role in cell positioning and movement in lymphoid tissues by mediating degradation of 7-alpha,25-dihydroxycholesterol (7-alpha,25-OHC): 7-alpha,25-OHC acts as a ligand for the G protein-coupled receptor GPR183/EBI2, a chemotactic receptor for a number of lymphoid cells. The sequence is that of 3 beta-hydroxysteroid dehydrogenase type 7 from Homo sapiens (Human).